The primary structure comprises 199 residues: MSNLENLTSKIIEDANKEAEELLSEAKKEENKIVDEKVKKGNKAKEQIIEKSKREAKTKAERIISNTHLKIRNNKLEAKQEMINKVFDEAVIKLQNLSKDEYLDFVKSSILSLDIEGDEEIIISPNDKDKMDVNFMLTLNNKLKAKGKKGLLKISNENRNIKGGFILYKNGIEINNSFEALVDSLRDELEQEIIEALFS.

The protein belongs to the V-ATPase E subunit family.

Produces ATP from ADP in the presence of a proton gradient across the membrane. The protein is V-type ATP synthase subunit E of Clostridium botulinum (strain Hall / ATCC 3502 / NCTC 13319 / Type A).